The chain runs to 479 residues: GTPase Der (479 aa).

2 EngA-type G domains span residues 3–167 (FTLA…EAAA) and 191–366 (LQIA…ATWN). GTP-binding positions include 9–16 (GRPNVGKS), 56–60 (DTAGL), 119–122 (NKAE), 197–204 (GRPNAGKS), 244–248 (DTAGM), and 309–312 (NKWD). In terms of domain architecture, KH-like spans 367–453 (TRISTARLNQ…RLWMRSQADD (87 aa)). Residues 449 to 479 (SQADDNPYKNRKKSTPSRLNKHVRKGETKKG) form a disordered region. The segment covering 457-472 (KNRKKSTPSRLNKHVR) has biased composition (basic residues).

It belongs to the TRAFAC class TrmE-Era-EngA-EngB-Septin-like GTPase superfamily. EngA (Der) GTPase family. Associates with the 50S ribosomal subunit.

Functionally, GTPase that plays an essential role in the late steps of ribosome biogenesis. The sequence is that of GTPase Der from Jannaschia sp. (strain CCS1).